The primary structure comprises 37 residues: Cytochrome b6-f complex subunit 5 (37 aa).

The helical transmembrane segment at 5–25 (ILLGIVLGMVVVTLAGLFVAA) threads the bilayer.

The protein belongs to the PetG family. As to quaternary structure, the 4 large subunits of the cytochrome b6-f complex are cytochrome b6, subunit IV (17 kDa polypeptide, PetD), cytochrome f and the Rieske protein, while the 4 small subunits are PetG, PetL, PetM and PetN. The complex functions as a dimer.

The protein resides in the cellular thylakoid membrane. Functionally, component of the cytochrome b6-f complex, which mediates electron transfer between photosystem II (PSII) and photosystem I (PSI), cyclic electron flow around PSI, and state transitions. PetG is required for either the stability or assembly of the cytochrome b6-f complex. The chain is Cytochrome b6-f complex subunit 5 from Synechococcus sp. (strain JA-2-3B'a(2-13)) (Cyanobacteria bacterium Yellowstone B-Prime).